Here is a 311-residue protein sequence, read N- to C-terminus: Glutaminase (311 aa).

Substrate-binding residues include serine 66, asparagine 116, glutamate 162, asparagine 169, tyrosine 193, tyrosine 245, and valine 263.

It belongs to the glutaminase family. Homotetramer.

It carries out the reaction L-glutamine + H2O = L-glutamate + NH4(+). The chain is Glutaminase from Rhodopseudomonas palustris (strain HaA2).